A 299-amino-acid polypeptide reads, in one-letter code: ATP phosphoribosyltransferase (299 aa).

The protein belongs to the ATP phosphoribosyltransferase family. Long subfamily. Mg(2+) is required as a cofactor.

The protein localises to the cytoplasm. The catalysed reaction is 1-(5-phospho-beta-D-ribosyl)-ATP + diphosphate = 5-phospho-alpha-D-ribose 1-diphosphate + ATP. It participates in amino-acid biosynthesis; L-histidine biosynthesis; L-histidine from 5-phospho-alpha-D-ribose 1-diphosphate: step 1/9. Feedback inhibited by histidine. Functionally, catalyzes the condensation of ATP and 5-phosphoribose 1-diphosphate to form N'-(5'-phosphoribosyl)-ATP (PR-ATP). Has a crucial role in the pathway because the rate of histidine biosynthesis seems to be controlled primarily by regulation of HisG enzymatic activity. The chain is ATP phosphoribosyltransferase from Rhodopirellula baltica (strain DSM 10527 / NCIMB 13988 / SH1).